We begin with the raw amino-acid sequence, 608 residues long: UvrABC system protein C (608 aa).

A GIY-YIG domain is found at 13-91 (HDPGVYRMFD…IKTFQPRYNV (79 aa)). Residues 201 to 236 (QQVLDHLIAKMETASRALDFENAARFRDQIQAVRAV) form the UVR domain.

It belongs to the UvrC family. Interacts with UvrB in an incision complex.

Its subcellular location is the cytoplasm. The UvrABC repair system catalyzes the recognition and processing of DNA lesions. UvrC both incises the 5' and 3' sides of the lesion. The N-terminal half is responsible for the 3' incision and the C-terminal half is responsible for the 5' incision. This is UvrABC system protein C from Actinobacillus succinogenes (strain ATCC 55618 / DSM 22257 / CCUG 43843 / 130Z).